A 251-amino-acid polypeptide reads, in one-letter code: Small ribosomal subunit protein uS2B (251 aa).

At Ser-2 the chain carries N-acetylserine. The span at 214-225 shows a compositional bias: low complexity; it reads AVEEASATGATE. Residues 214–251 form a disordered region; the sequence is AVEEASATGATEEATEEATEETTEATEWAEDNTENATW. Residues 226 to 251 are compositionally biased toward acidic residues; the sequence is EATEEATEETTEATEWAEDNTENATW.

Belongs to the universal ribosomal protein uS2 family. In terms of assembly, component of the small ribosomal subunit. Mature ribosomes consist of a small (40S) and a large (60S) subunit. The 40S subunit contains about 33 different proteins and 1 molecule of RNA (18S). The 60S subunit contains about 49 different proteins and 3 molecules of RNA (25S, 5.8S and 5S). Interacts with RPS21.

The protein localises to the cytoplasm. Its function is as follows. Required for the assembly and/or stability of the 40S ribosomal subunit. Required for the processing of the 20S rRNA-precursor to mature 18S rRNA in a late step of the maturation of 40S ribosomal subunits. The polypeptide is Small ribosomal subunit protein uS2B (Vanderwaltozyma polyspora (strain ATCC 22028 / DSM 70294 / BCRC 21397 / CBS 2163 / NBRC 10782 / NRRL Y-8283 / UCD 57-17) (Kluyveromyces polysporus)).